The following is a 319-amino-acid chain: GTP cyclohydrolase MptA (319 aa).

Belongs to the GTP cyclohydrolase IV family. In terms of assembly, homodimer. Requires Fe(2+) as cofactor.

It carries out the reaction GTP + H2O = 7,8-dihydroneopterin 2',3'-cyclic phosphate + formate + diphosphate + H(+). It functions in the pathway cofactor biosynthesis; 5,6,7,8-tetrahydromethanopterin biosynthesis. In terms of biological role, converts GTP to 7,8-dihydro-D-neopterin 2',3'-cyclic phosphate, the first intermediate in the biosynthesis of coenzyme methanopterin. This is GTP cyclohydrolase MptA from Methanosarcina barkeri (strain Fusaro / DSM 804).